An 899-amino-acid polypeptide reads, in one-letter code: Inositol 1,4,5-triphosphate receptor associated 1 (899 aa).

Disordered regions lie at residues 32-110, 164-286, 324-391, and 463-486; these read PGTH…HRHL, RRGR…PLQH, KTAR…EEPG, and AAEQ…SKSG. A compositionally biased stretch (basic residues) spans 100-110; sequence SPHRRLSHRHL. S106 carries the post-translational modification Phosphoserine. The interval 140–172 is interaction with PRKG1; that stretch reads SEEDKKKNLALLEEAKLVSERFLTRRGRKSRSS. Over residues 171 to 180 the composition is skewed to polar residues; sequence SSLGDSPSAV. Low complexity predominate over residues 181 to 203; sequence SPNLSSGASPASSRSCSLTISTS. The span at 266 to 281 shows a compositional bias: basic and acidic residues; that stretch reads TVEKTKELTVEQKENF. Residues 333-351 are compositionally biased toward polar residues; it reads PRTTAQGSGGTVSPHSLGQ. S382 carries the post-translational modification Phosphoserine. The tract at residues 521–567 is interaction with ITPR1; sequence NVFVQLSLAFRNDSYTLESRINQAERERNLTEENTEKELENFKASIT. The stretch at 534 to 632 forms a coiled coil; the sequence is SYTLESRINQ…MQYVENLKRT (99 aa). Phosphoserine occurs at positions 670 and 683. 2 disordered regions span residues 695–722 and 757–818; these read LPGQ…SSIS and TSQE…DQGS. Low complexity predominate over residues 699 to 715; it reads APSSSPMPSLPALSESS. Basic and acidic residues-rich tracts occupy residues 759–770 and 777–787; these read QETKAKAEEEAY and GVKKTEELQDL. Residues 788–814 show a composition bias toward acidic residues; it reads KEEEEEEQKTESPEEPEEVEETQEDEK. A helical transmembrane segment spans residues 839–859; the sequence is WQVIWMMAAVMLVLSVVLGLY. The interval 867-899 is disordered; sequence EEADGPPGRSTCSAAQRDSWWSSGLQQELPAEQ. The segment covering 876 to 892 has biased composition (polar residues); that stretch reads STCSAAQRDSWWSSGLQ.

As to quaternary structure, part of cGMP kinase signaling complex at least composed of ACTA2/alpha-actin, CNN1/calponin H1, PLN/phospholamban, PRKG1 and ITPR1. Interacts with PRKG1/cGKI-beta and ITPR1/IP3R type I. Interacts with HCN4; regulates HCN4 channel activity. Post-translationally, phosphorylated by PRKG1/cGKI. In terms of tissue distribution, highly expressed in smooth muscle such as aorta, colon and uterus. Detected in the brain, in the thalamus, in the hippocampus and myenteric plexus. Highly expressed in megakaryocytes. Down-regulated during macrophage differentiation.

The protein localises to the membrane. Its subcellular location is the cytoplasm. It localises to the perinuclear region. It is found in the sarcoplasmic reticulum. Functionally, plays a role as NO/PRKG1-dependent regulator of IP3-induced calcium release; its phosphorylation by PRKG1 inhibits bradykinin and IP3-induced calcium release from intracellular stores. Recruits PRKG1 to the endoplasmic reticulum and may mediate the assembly of PRKG1 and ITPR1 in a macrocomplex. Involved in PRKG1 signaling cascade leading to inhibition of platelet activation and aggregation. Also mediates NO-dependent inhibition of calcium signaling in gastrointestinal smooth muscle contributing to NO-dependent relaxation. Plays a role in the regulation of cellular excitability by regulating the hyperpolarization-activated cyclic nucleotide-gated HCN4 channel activity. In Mus musculus (Mouse), this protein is Inositol 1,4,5-triphosphate receptor associated 1 (Irag1).